A 42-amino-acid chain; its full sequence is Photosystem I reaction center subunit IX (42 aa).

The helical transmembrane segment at 8-28 threads the bilayer; the sequence is YLSTAPVLFTVWLSFTASFII.

This sequence belongs to the PsaJ family.

The protein localises to the plastid. The protein resides in the chloroplast thylakoid membrane. Its function is as follows. May help in the organization of the PsaE and PsaF subunits. In Rhodomonas salina (Cryptomonas salina), this protein is Photosystem I reaction center subunit IX.